The sequence spans 114 residues: T cell receptor beta variable 6-1 (114 aa).

The signal sequence occupies residues 1–21 (MSIGLLCCVAFSLLWASPVNA). The region spanning 22 to 114 (GVTQTPKFQV…TSVYFCASSE (93 aa)) is the Ig-like domain. Cysteines 42 and 110 form a disulfide. Asn84 is a glycosylation site (N-linked (GlcNAc...) asparagine).

Alpha-beta TR is a heterodimer composed of an alpha and beta chain; disulfide-linked. The alpha-beta TR is associated with the transmembrane signaling CD3 coreceptor proteins to form the TR-CD3 (TcR or TCR). The assembly of alpha-beta TR heterodimers with CD3 occurs in the endoplasmic reticulum where a single alpha-beta TR heterodimer associates with one CD3D-CD3E heterodimer, one CD3G-CD3E heterodimer and one CD247 homodimer forming a stable octameric structure. CD3D-CD3E and CD3G-CD3E heterodimers preferentially associate with TR alpha and TR beta chains, respectively. The association of the CD247 homodimer is the last step of TcR assembly in the endoplasmic reticulum and is required for transport to the cell surface.

It is found in the cell membrane. V region of the variable domain of T cell receptor (TR) beta chain that participates in the antigen recognition. Alpha-beta T cell receptors are antigen specific receptors which are essential to the immune response and are present on the cell surface of T lymphocytes. Recognize peptide-major histocompatibility (MH) (pMH) complexes that are displayed by antigen presenting cells (APC), a prerequisite for efficient T cell adaptive immunity against pathogens. Binding of alpha-beta TR to pMH complex initiates TR-CD3 clustering on the cell surface and intracellular activation of LCK that phosphorylates the ITAM motifs of CD3G, CD3D, CD3E and CD247 enabling the recruitment of ZAP70. In turn ZAP70 phosphorylates LAT, which recruits numerous signaling molecules to form the LAT signalosome. The LAT signalosome propagates signal branching to three major signaling pathways, the calcium, the mitogen-activated protein kinase (MAPK) kinase and the nuclear factor NF-kappa-B (NF-kB) pathways, leading to the mobilization of transcription factors that are critical for gene expression and essential for T cell growth and differentiation. The T cell repertoire is generated in the thymus, by V-(D)-J rearrangement. This repertoire is then shaped by intrathymic selection events to generate a peripheral T cell pool of self-MH restricted, non-autoaggressive T cells. Post-thymic interaction of alpha-beta TR with the pMH complexes shapes TR structural and functional avidity. The chain is T cell receptor beta variable 6-1 from Homo sapiens (Human).